The primary structure comprises 793 residues: Serine/threonine-protein phosphatase BSU1 (793 aa).

Kelch repeat units follow at residues 53–109, 110–160, 214–262, 264–314, and 329–388; these read STTA…LYGT, LILI…IAAQ, IFLL…VFGG, KLHV…NQYQ, and HLYV…EASS. Serine 395 and serine 444 each carry phosphoserine. Mn(2+) is bound by residues aspartate 510, histidine 512, aspartate 544, and asparagine 576. Catalysis depends on histidine 577, which acts as the Proton donor. Mn(2+) is bound by residues histidine 629 and histidine 707. Residue serine 764 is modified to Phosphoserine.

Belongs to the PPP phosphatase family. BSU subfamily. As to quaternary structure, interacts with CDG1, CDL1 and ASK7/BIN2. Mn(2+) serves as cofactor. Post-translationally, phosphorylated at Ser-395 and Ser-444. Phosphorylated at Ser-764 by CDG1 and CDL1. In terms of tissue distribution, mainly expressed in young, elongating tissues. In young seedlings, it is expressed at the base of the hypocotyl, at the tip and most peripheral cell layers of cotyledons, and in the vascular cylinder of roots, particularly in the elongation zone and at the point of emergence of lateral roots. In mature plants, it is still present in the root vasculature, but almost completely absent in fully expanded stems and leaves. In flowers, it is mainly expressed in sepal veins, anther filaments, and in the style, suggesting that BSU1 is expressed in actively growing regions and apparently enriched in vascular tissues.

The protein localises to the nucleus. It carries out the reaction O-phospho-L-seryl-[protein] + H2O = L-seryl-[protein] + phosphate. The enzyme catalyses O-phospho-L-threonyl-[protein] + H2O = L-threonyl-[protein] + phosphate. With respect to regulation, activated by phosphorylation at Ser-764 by CDG1. In terms of biological role, phosphatase that acts as a positive regulator of brassinosteroid (BR) signaling. Dephosphorylates BES1, a transcription factor that regulates the expression of BR-response genes, thereby playing an important role in the regulation of response to BRs. Inactivates the negative regulator of BR signaling ASK7/BIN2 by dephosphorylation at 'Tyr-200'. The protein is Serine/threonine-protein phosphatase BSU1 (BSU1) of Arabidopsis thaliana (Mouse-ear cress).